Here is a 93-residue protein sequence, read N- to C-terminus: Early nodulin-12A (93 aa).

Residues 1–24 form the signal peptide; the sequence is MASFLLSILVFFLSALVLVPQGFA. The disordered stretch occupies residues 30-93; that stretch reads PAYRPPQTEP…HPPSEDNIHF (64 aa). 10 consecutive repeat copies span residues 34-38, 39-43, 44-48, 49-53, 54-58, 59-63, 64-68, 69-73, 74-78, and 79-83. A 10 X 5 AA tandem repeats of P-P-[HQVRT]-[HKNT]-[DEKR] region spans residues 34-83; the sequence is PPQTEPPVHKPPHKEPPVHKPPHKDPPVNKPPQKEPPVHKPPRKEPPTHR. The segment covering 46–93 has biased composition (basic and acidic residues); it reads HKEPPVHKPPHKDPPVNKPPQKEPPVHKPPRKEPPTHRHPPSEDNIHF.

The protein belongs to the plant proline-rich protein superfamily. ENOD12 family. As to expression, more abundant in the young nodules than the mature nodules.

It is found in the secreted. The protein resides in the cell wall. Involved in the infection process during the plant-rhizobium interaction. The chain is Early nodulin-12A (ENOD12A) from Medicago sativa (Alfalfa).